Reading from the N-terminus, the 142-residue chain is Hemoglobin subunit alpha (142 aa).

The 141-residue stretch at 2–142 (VLSPADKSNV…VSTVLTSKYR (141 aa)) folds into the Globin domain. A Phosphoserine modification is found at serine 4. Residues lysine 8 and lysine 12 each carry the N6-succinyllysine modification. At lysine 17 the chain carries N6-acetyllysine; alternate. At lysine 17 the chain carries N6-succinyllysine; alternate. The residue at position 25 (tyrosine 25) is a Phosphotyrosine. Serine 36 carries the phosphoserine modification. Lysine 41 carries the post-translational modification N6-succinyllysine. Serine 50 is modified (phosphoserine). Residue histidine 59 coordinates O2. Histidine 88 serves as a coordination point for heme b. Serine 103 carries the phosphoserine modification. Phosphothreonine is present on threonine 109. Phosphoserine is present on residues serine 125 and serine 132. Residues threonine 135 and threonine 138 each carry the phosphothreonine modification. Serine 139 is modified (phosphoserine).

This sequence belongs to the globin family. Heterotetramer of two alpha chains and two beta chains. Red blood cells.

Involved in oxygen transport from the lung to the various peripheral tissues. In terms of biological role, hemopressin acts as an antagonist peptide of the cannabinoid receptor CNR1. Hemopressin-binding efficiently blocks cannabinoid receptor CNR1 and subsequent signaling. This chain is Hemoglobin subunit alpha (HBA), found in Macaca fuscata fuscata (Japanese macaque).